Consider the following 373-residue polypeptide: Lipoyl synthase (373 aa).

The disordered stretch occupies residues 14-36 (VSNDHPSSSPLQPGVKQSGEDKI). 7 residues coordinate [4Fe-4S] cluster: Cys-81, Cys-86, Cys-92, Cys-107, Cys-111, Cys-114, and Ser-323. One can recognise a Radical SAM core domain in the interval 93-312 (FSHGTATFMI…EEYGMALGFS (220 aa)). The tract at residues 346–373 (PAVSSTEHRERNTIASKSASKTESIHHR) is disordered. Residues 358–367 (TIASKSASKT) show a composition bias toward polar residues.

It belongs to the radical SAM superfamily. Lipoyl synthase family. [4Fe-4S] cluster is required as a cofactor.

It is found in the cytoplasm. The catalysed reaction is [[Fe-S] cluster scaffold protein carrying a second [4Fe-4S](2+) cluster] + N(6)-octanoyl-L-lysyl-[protein] + 2 oxidized [2Fe-2S]-[ferredoxin] + 2 S-adenosyl-L-methionine + 4 H(+) = [[Fe-S] cluster scaffold protein] + N(6)-[(R)-dihydrolipoyl]-L-lysyl-[protein] + 4 Fe(3+) + 2 hydrogen sulfide + 2 5'-deoxyadenosine + 2 L-methionine + 2 reduced [2Fe-2S]-[ferredoxin]. The protein operates within protein modification; protein lipoylation via endogenous pathway; protein N(6)-(lipoyl)lysine from octanoyl-[acyl-carrier-protein]: step 2/2. Functionally, catalyzes the radical-mediated insertion of two sulfur atoms into the C-6 and C-8 positions of the octanoyl moiety bound to the lipoyl domains of lipoate-dependent enzymes, thereby converting the octanoylated domains into lipoylated derivatives. This Xylella fastidiosa (strain M23) protein is Lipoyl synthase.